The sequence spans 426 residues: 4-hydroxy-3-methylbut-2-en-1-yl diphosphate synthase (flavodoxin) (426 aa).

The disordered stretch occupies residues 1–20; the sequence is MLDRDLTLSDDAYESSPVSR. Residues C320, C323, C366, and E373 each contribute to the [4Fe-4S] cluster site.

This sequence belongs to the IspG family. Requires [4Fe-4S] cluster as cofactor.

It catalyses the reaction (2E)-4-hydroxy-3-methylbut-2-enyl diphosphate + oxidized [flavodoxin] + H2O + 2 H(+) = 2-C-methyl-D-erythritol 2,4-cyclic diphosphate + reduced [flavodoxin]. The protein operates within isoprenoid biosynthesis; isopentenyl diphosphate biosynthesis via DXP pathway; isopentenyl diphosphate from 1-deoxy-D-xylulose 5-phosphate: step 5/6. Functionally, converts 2C-methyl-D-erythritol 2,4-cyclodiphosphate (ME-2,4cPP) into 1-hydroxy-2-methyl-2-(E)-butenyl 4-diphosphate. The polypeptide is 4-hydroxy-3-methylbut-2-en-1-yl diphosphate synthase (flavodoxin) (Wolbachia pipientis subsp. Culex pipiens (strain wPip)).